A 1108-amino-acid polypeptide reads, in one-letter code: AP-3 complex subunit beta (1108 aa).

HEAT repeat units follow at residues D90–I127, I327–S363, E397–P433, and D434–T471. Residues K480–E490 show a composition bias toward basic and acidic residues. Disordered regions lie at residues K480 to S501, D736 to E797, and L811 to E835. 2 stretches are compositionally biased toward acidic residues: residues D736–F764 and Y780–E797.

The protein belongs to the adaptor complexes large subunit family. In terms of assembly, adaptor protein complex 3 (AP-3) is a heterotetramer composed of two large adaptins (delta-type subunit and beta-type subunit), a medium adaptin (mu-type subunit) and a small adaptin (sigma-type subunit).

It is found in the endosome membrane. Part of the AP-3 complex, an adaptor-related complex which is essential for the compartmentalization of the endocytic pathway. In Dictyostelium discoideum (Social amoeba), this protein is AP-3 complex subunit beta (ap3b-1).